We begin with the raw amino-acid sequence, 155 residues long: Small ribosomal subunit protein uS7 (155 aa).

This sequence belongs to the universal ribosomal protein uS7 family. In terms of assembly, part of the 30S ribosomal subunit. Contacts proteins S9 and S11.

In terms of biological role, one of the primary rRNA binding proteins, it binds directly to 16S rRNA where it nucleates assembly of the head domain of the 30S subunit. Is located at the subunit interface close to the decoding center, probably blocks exit of the E-site tRNA. The chain is Small ribosomal subunit protein uS7 from Helicobacter acinonychis (strain Sheeba).